A 375-amino-acid chain; its full sequence is RING-H2 finger protein ATL16 (375 aa).

A disordered region spans residues 1–20; that stretch reads MDLSNRRNPLRDLSFPPPPP. The helical transmembrane segment at 39 to 59 threads the bilayer; it reads VAVIGILATAFLLVSYYVFVI. The RING-type; atypical zinc finger occupies 138-180; the sequence is CSVCLSEFQDEEKLRIIPNCSHLFHIDCIDVWLQNNANCPLCR. Disordered stretches follow at residues 223-266 and 356-375; these read GSDR…DRGG and SFGSSRRSRSSSKLPLYFEP. The segment covering 238–257 has biased composition (polar residues); that stretch reads QERSNSGYLLNENTQNSISP.

Belongs to the RING-type zinc finger family. ATL subfamily.

It is found in the membrane. It carries out the reaction S-ubiquitinyl-[E2 ubiquitin-conjugating enzyme]-L-cysteine + [acceptor protein]-L-lysine = [E2 ubiquitin-conjugating enzyme]-L-cysteine + N(6)-ubiquitinyl-[acceptor protein]-L-lysine.. It functions in the pathway protein modification; protein ubiquitination. The polypeptide is RING-H2 finger protein ATL16 (ATL16) (Arabidopsis thaliana (Mouse-ear cress)).